We begin with the raw amino-acid sequence, 330 residues long: Transcription factor TGA5 (330 aa).

The span at 1–13 (MGDTSPRTSVSTD) shows a compositional bias: polar residues. Residues 1–64 (MGDTSPRTSV…REAARKSRLR (64 aa)) form a disordered region. A compositionally biased stretch (basic and acidic residues) spans 35-47 (SSDRSKSKMDQKT). The bZIP domain maps to 44 to 107 (DQKTLRRLAQ…SSGDQAHSTA (64 aa)). 2 coiled-coil regions span residues 45 to 98 (QKTL…FISS) and 211 to 244 (EQQS…SLAD). The interval 46–66 (KTLRRLAQNREAARKSRLRKK) is basic motif. The tract at residues 72-86 (LENSRLKLTQLEQEL) is leucine-zipper. The DOG1 domain maps to 111 to 327 (AMAFDVEYRR…RALSSLWLAR (217 aa)).

It belongs to the bZIP family. As to quaternary structure, binds DNA as a dimer. Interaction with the Dof domain protein OBP1 enhances the binding to the ocs element. Interacts with NPR1, NPR3 and NPR4. As to expression, predominantly expressed in roots.

The protein localises to the nucleus. Its function is as follows. Transcriptional activator that binds specifically to the DNA sequence 5'-TGACG-3'. Recognizes ocs elements like the as-1 motif of the cauliflower mosaic virus 35S promoter. Binding to the as-1-like cis elements mediate auxin- and salicylic acid-inducible transcription. May be involved in the induction of the systemic acquired resistance (SAR) via its interaction with NPR1. Could also bind to the Hex-motif (5'-TGACGTGG-3') another cis-acting element found in plant histone promoters. In Arabidopsis thaliana (Mouse-ear cress), this protein is Transcription factor TGA5 (TGA5).